The chain runs to 143 residues: Putative pre-16S rRNA nuclease (143 aa).

Belongs to the YqgF nuclease family.

The protein localises to the cytoplasm. In terms of biological role, could be a nuclease involved in processing of the 5'-end of pre-16S rRNA. This chain is Putative pre-16S rRNA nuclease, found in Salinibacter ruber (strain DSM 13855 / M31).